The following is a 235-amino-acid chain: Ubiquinone biosynthesis O-methyltransferase (235 aa).

Arg39, Gly59, Asp80, and Met124 together coordinate S-adenosyl-L-methionine.

It belongs to the methyltransferase superfamily. UbiG/COQ3 family.

The enzyme catalyses a 3-demethylubiquinol + S-adenosyl-L-methionine = a ubiquinol + S-adenosyl-L-homocysteine + H(+). It catalyses the reaction a 3-(all-trans-polyprenyl)benzene-1,2-diol + S-adenosyl-L-methionine = a 2-methoxy-6-(all-trans-polyprenyl)phenol + S-adenosyl-L-homocysteine + H(+). The protein operates within cofactor biosynthesis; ubiquinone biosynthesis. O-methyltransferase that catalyzes the 2 O-methylation steps in the ubiquinone biosynthetic pathway. In Photobacterium profundum (strain SS9), this protein is Ubiquinone biosynthesis O-methyltransferase.